The chain runs to 253 residues: Phosphoglycerate mutase 2 (253 aa).

Threonine 3 carries the post-translational modification Phosphothreonine. Substrate is bound by residues 10 to 17 (RHGESTWN), 23 to 24 (CG), arginine 62, 89 to 92 (ERHY), lysine 100, and 116 to 117 (RR). Catalysis depends on histidine 11, which acts as the Tele-phosphohistidine intermediate. Serine 14 is modified (phosphoserine). Glutamate 89 functions as the Proton donor/acceptor in the catalytic mechanism. Serine 118 bears the Phosphoserine mark. Residues tyrosine 132 and tyrosine 133 each carry the phosphotyrosine modification. A Phosphoserine modification is found at serine 135. Threonine 152 carries the phosphothreonine modification. 187–188 (GN) contacts substrate.

The protein belongs to the phosphoglycerate mutase family. BPG-dependent PGAM subfamily. As to quaternary structure, homodimer. Interacts with ENO1. In terms of tissue distribution, expressed in the heart and muscle. Not found in the liver and brain.

It catalyses the reaction (2R)-2-phosphoglycerate = (2R)-3-phosphoglycerate. It carries out the reaction (2R)-3-phospho-glyceroyl phosphate = (2R)-2,3-bisphosphoglycerate + H(+). Its function is as follows. Interconversion of 3- and 2-phosphoglycerate with 2,3-bisphosphoglycerate as the primer of the reaction. Can also catalyze the reaction of EC 5.4.2.4 (synthase), but with a reduced activity. The sequence is that of Phosphoglycerate mutase 2 (PGAM2) from Homo sapiens (Human).